The sequence spans 43 residues: Protein PsbN (43 aa).

A helical membrane pass occupies residues 7–27 (IAIFISGLLVSFTGYALYTAF).

This sequence belongs to the PsbN family.

It is found in the plastid. It localises to the chloroplast thylakoid membrane. In terms of biological role, may play a role in photosystem I and II biogenesis. The chain is Protein PsbN from Suaeda maritima (Annual sea blite).